Consider the following 538-residue polypeptide: Prickle planar cell polarity protein 3-A (538 aa).

The region spanning 66–175 is the PET domain; that stretch reads SGSQRDSLCE…CVRPVSGTMS (110 aa). LIM zinc-binding domains follow at residues 177-241, 242-302, and 305-366; these read TVCQ…ELKR, PRCL…LYAQ, and DSCG…NATP. Residues 369-378 are compositionally biased toward polar residues; that stretch reads SFSPSQTDLS. Disordered stretches follow at residues 369 to 398, 433 to 463, and 475 to 538; these read SFSP…DGDS, RGAP…TRVT, and SVSL…CLLS. The span at 435 to 449 shows a compositional bias: basic and acidic residues; the sequence is APKEFSRECPNRRSL. Polar residues predominate over residues 451–463; it reads DLNSHTRTPTRVT. 2 stretches are compositionally biased toward low complexity: residues 475–488 and 514–523; these read SVSL…SSSS and APPTHAPTST.

Belongs to the prickle / espinas / testin family. As to quaternary structure, interacts with vangl2 via its C-terminus. The vangl2-dependent membrane recruitment of prickle3 is a prerequisite for its polarization. Interacts with wtip. Wtip is involved in the recruitment of prickle3 to the basal body. In terms of tissue distribution, predominantly expressed in the epidermal ectoderm.

The protein localises to the cytoplasm. Its subcellular location is the cell membrane. The protein resides in the mitochondrion. Functionally, involved in the planar cell polarity (PCP) pathway that is essential for the polarization of epithelial cells during morphogenetic processes, including gastrulation and neurulation. PCP is maintained by two molecular modules, the global and the core modules. Proteins of the core module include the proteins Frizzled (Fz), Disheveled (Dsh), Van Gogh (Vang), Prickle (Pk), Flamingo (Fmi, Celsr) and Diego (Dgo). The core module proteins develop subcellular asymmetry, accumulating in two groups on opposite sides of epithelial cells. Distinct proximal (Vang, Pk and Fmi) and distal (Fz, Dsh, Dgo and Fmi) complexes segregate to opposite sides of the cell, where they interact with the opposite complex in the neighboring cell at or near the adherents junctions. Directional information to orient polarization with respect to the tissue axes is provided by the global module which involves Wnt proteins. Involved in the organization of the basal body. Involved in cilia growth and positioning. Required for proper assembly, stability, and function of mitochondrial membrane ATP synthase (mitochondrial complex V). This is Prickle planar cell polarity protein 3-A (prickle3-a) from Xenopus laevis (African clawed frog).